Reading from the N-terminus, the 219-residue chain is Probable glutathione S-transferase MSR-1 (219 aa).

The GST N-terminal domain occupies 4–83 (NNVVLLDFSG…YIDEVWHEKC (80 aa)). Glutathione contacts are provided by residues Ser14, Lys41, Ile55, and 67–68 (ES). The 120-residue stretch at 89–208 (DPYQRSQARF…LPHPHKIYDF (120 aa)) folds into the GST C-terminal domain.

This sequence belongs to the GST superfamily. HSP26 family.

It catalyses the reaction RX + glutathione = an S-substituted glutathione + a halide anion + H(+). In terms of biological role, may play an important role in hormonal and growth regulatory responses. This is Probable glutathione S-transferase MSR-1 (MSR-1) from Nicotiana plumbaginifolia (Leadwort-leaved tobacco).